The chain runs to 848 residues: Neuroligin-3 (848 aa).

Residues 1–37 form the signal peptide; it reads MWLQLGLPSLSLSPTPTVGRSLCLILWFLSLVLRAST. The Extracellular segment spans residues 38–709; it reads QAPAPTVNTH…NPRDYSTELS (672 aa). N-linked (GlcNAc...) asparagine glycosylation is present at asparagine 98. The cysteines at positions 106 and 141 are disulfide-linked. The tract at residues 169 to 195 is disordered; the sequence is CRKGGSGAKKQGEDLADNDGDEDEDIR. Residues 182 to 194 show a composition bias toward acidic residues; sequence DLADNDGDEDEDI. Disulfide bonds link cysteine 340–cysteine 351 and cysteine 510–cysteine 544. An N-linked (GlcNAc...) asparagine glycan is attached at asparagine 545. Composition is skewed to polar residues over residues 645-656 and 677-689; these read TKVPPPDTTHSS and AYSNENAPGSWNG. The interval 645-691 is disordered; that stretch reads TKVPPPDTTHSSHITRRPNGKTWSTKRPAISPAYSNENAPGSWNGDQ. A helical transmembrane segment spans residues 710–730; sequence VTIAVGASLLFLNVLAFAALY. Over 731–848 the chain is Cytoplasmic; sequence YRKDKRRQEP…LPNSHSTTRV (118 aa). At serine 745 the chain carries Phosphoserine. Tyrosine 792 carries the post-translational modification Phosphotyrosine.

Belongs to the type-B carboxylesterase/lipase family. In terms of assembly, homodimer, and heterodimer with NLGN1 and NLGN2. Interacts with neurexins NRXN1, NRXN2 and NRXN3. Interaction with neurexins is mediated by heparan sulfate glycan modification on neurexin. Interacts (via its C-terminus) with DLG4/PSD-95 (via PDZ domain 3). The N-terminus is blocked. As to expression, detected in brain and on hippocampus neurons, especially at excitatory synapses. Detected in retina (at protein level). Expressed in brain, spinal cord and dorsal root ganglion.

Its subcellular location is the cell membrane. It localises to the synapse. Cell surface protein involved in cell-cell-interactions via its interactions with neurexin family members. Plays a role in synapse function and synaptic signal transmission, and probably mediates its effects by recruiting and clustering other synaptic proteins. May promote the initial formation of synapses, but is not essential for this. May also play a role in glia-glia or glia-neuron interactions in the developing peripheral nervous system. This is Neuroligin-3 (Nlgn3) from Rattus norvegicus (Rat).